The following is a 238-amino-acid chain: Ribosomal RNA small subunit methyltransferase E 1 (238 aa).

The protein belongs to the RNA methyltransferase RsmE family.

Its subcellular location is the cytoplasm. The enzyme catalyses uridine(1498) in 16S rRNA + S-adenosyl-L-methionine = N(3)-methyluridine(1498) in 16S rRNA + S-adenosyl-L-homocysteine + H(+). In terms of biological role, specifically methylates the N3 position of the uracil ring of uridine 1498 (m3U1498) in 16S rRNA. Acts on the fully assembled 30S ribosomal subunit. This chain is Ribosomal RNA small subunit methyltransferase E 1 (rsmE1), found in Borreliella burgdorferi (strain ATCC 35210 / DSM 4680 / CIP 102532 / B31) (Borrelia burgdorferi).